The primary structure comprises 295 residues: Tyrosine recombinase XerC (295 aa).

Residues 1–85 form the Core-binding (CB) domain; sequence MQTYLQKYWN…ALRQFLAFLV (85 aa). Residues 106–285 form the Tyr recombinase domain; the sequence is HLPKNINAEQ…NFQHLAEVYD (180 aa). Catalysis depends on residues R145, K169, H237, R240, and H263. Y272 functions as the O-(3'-phospho-DNA)-tyrosine intermediate in the catalytic mechanism.

This sequence belongs to the 'phage' integrase family. XerC subfamily. Forms a cyclic heterotetrameric complex composed of two molecules of XerC and two molecules of XerD.

The protein resides in the cytoplasm. Functionally, site-specific tyrosine recombinase, which acts by catalyzing the cutting and rejoining of the recombining DNA molecules. The XerC-XerD complex is essential to convert dimers of the bacterial chromosome into monomers to permit their segregation at cell division. It also contributes to the segregational stability of plasmids. In Mannheimia succiniciproducens (strain KCTC 0769BP / MBEL55E), this protein is Tyrosine recombinase XerC.